The following is a 305-amino-acid chain: tRNA-splicing endonuclease (305 aa).

Active-site residues include Tyr246, His257, and Lys287.

Belongs to the tRNA-intron endonuclease family. Archaeal long subfamily. In terms of assembly, homodimer.

The catalysed reaction is pretRNA = a 3'-half-tRNA molecule with a 5'-OH end + a 5'-half-tRNA molecule with a 2',3'-cyclic phosphate end + an intron with a 2',3'-cyclic phosphate and a 5'-hydroxyl terminus.. Its function is as follows. Endonuclease that removes tRNA introns. Cleaves pre-tRNA at the 5'- and 3'-splice sites to release the intron. The products are an intron and two tRNA half-molecules bearing 2',3' cyclic phosphate and 5'-OH termini. Recognizes a pseudosymmetric substrate in which 2 bulged loops of 3 bases are separated by a stem of 4 bp. In Archaeoglobus fulgidus (strain ATCC 49558 / DSM 4304 / JCM 9628 / NBRC 100126 / VC-16), this protein is tRNA-splicing endonuclease.